Reading from the N-terminus, the 316-residue chain is MERDCDIVDLDQPSLGTVISIKDGSTPTDISTTSSTTEDKLCSGCGCLIKDRYIYRVMEDSYHESCLRCSCCQLSLSSFKKCFSRHGNIYCEHDHQMLYGKRCRRCMTLLLPTDIVHRVHFMYYHAQCFSCCSCQRPFNLGDEYHVFDGEVFCRNDYQSICNFQTISNPDPLMEEVVRSEIHRKTPKRPRTILNAQQRRQFKTAFERSSKPSRKVREQLANETGLSVRVVQVWFQNQRAKIKKLNKKDSDSGDTFKHGPGSEGRSTEDIRSSDDEEESVINLDADEVETSETSSYTDPIQKLYNMTSSQIYFPYHS.

2 consecutive LIM zinc-binding domains span residues Lys40 to Lys101 and Arg102 to Phe163. A DNA-binding region (homeobox) is located at residues Pro186–Asn245. The tract at residues Leu244–Asp297 is disordered. A compositionally biased stretch (basic and acidic residues) spans Lys246–Lys256. Acidic residues predominate over residues Asp273 to Thr289.

It is found in the nucleus. Transcription factor. Required for the terminal differentiation of sensory- and motor-neurons, especially GABAergic neurons, and for morphological aspects of uterine development. Plays a role in the cell-type-specific regulation of glutamic acid decarboxylase unc-25. Involved in promoting sleep-like behavioral quiescence, acting by modulating expression of transcription factor aptf-1 in the single sleep-active ring interneuron RIS. Plays a role in regulation of RIS differentiation. Required for the functional asymmetry of the ASER and ASEL chemosensory neuron pair, conferring the ability to discriminate sodium from chloride, perhaps by modulating expression of receptor-type guanylate cyclases, such as gcy-5. Involved in regulating postembryonic axon maintenance in the ventral nerve cord, acting in concert with LIM homeobox protein ceh-14, via modulation of expression of immunoglobulin domain zig genes in the interneuron PVT. May play a role in the functions of the excretory gland cell. The sequence is that of LIM/homeobox protein lim-6 from Caenorhabditis elegans.